Consider the following 616-residue polypeptide: MDKQAERGQSAGPVKTPQGTQPPAHNYTYHTNAAQRAVYDYLKNVKPIPELAEPKTYKTYEEASVEAVLYPIIEKHQVIMVAGAFFGDEGKGKTVNAVANHPGCTFIARVNSGENAGHTVYDDAGRKFVFNLAPSGLLSKGKRNYVGPECVMDPISFMENEVKQLIEANVPYKEQLFIGNVSIVTPYHKLLDLLASAPNSSTLKGMAPIHASKVTKRGIRLDHIFNDQSVLRSRLRKDIDTYFGFLKVKGLSDADVLRRCEKENGDGVVRVPPYVVEFVQAEDKVEYLVKLYMDRVRNNKNFPARCDVAHELRSALSRGEKVMLEGPQSYWLSNAREKFWESTTSADTTASGLLATAQYNFQLYSSVVINVHKAPGSSRVGVGANPSSFVAQDYFSATGVKTLRDLPENMCVDFDSIQKLFFTKAFHPETKEYNGIWEPLEFEDSTGKYNIGVAMAVASSRQHGECGAVTKKPRVCGFFDCVLQYEVNAVQGPYLSISALDRGDDYDKLGVTIAYVYYNGKNDEVLNINGREYKNGDIIKAGEAVPGEVALYYCHPIVKLINGWKQTPIAASKRKPGDPLPRGVCEFLSTVEYFTKAKIISIGNGPRGKDIIYIKQ.

Positions 1–27 (MDKQAERGQSAGPVKTPQGTQPPAHNY) are disordered. Residues 17–27 (PQGTQPPAHNY) show a composition bias toward polar residues. GTP is bound by residues 87–93 (GDEGKGK) and 117–119 (GHT). Asp-88 (proton acceptor) is an active-site residue. Positions 88 and 117 each coordinate Mg(2+). Residues 88 to 91 (DEGK), 115 to 118 (NAGH), Thr-202, Lys-216, Gln-328, Thr-343, and Lys-472 each bind IMP. Residue His-118 is the Proton donor of the active site. A substrate-binding site is contributed by 468 to 474 (AVTKKPR). Residues Arg-474 and 603-605 (GNG) contribute to the GTP site.

The protein belongs to the adenylosuccinate synthetase family. In terms of assembly, homodimer. Requires Mg(2+) as cofactor.

It localises to the cytoplasm. It catalyses the reaction IMP + L-aspartate + GTP = N(6)-(1,2-dicarboxyethyl)-AMP + GDP + phosphate + 2 H(+). It participates in purine metabolism; AMP biosynthesis via de novo pathway; AMP from IMP: step 1/2. In terms of biological role, plays an important role in the salvage pathway for purine nucleotide biosynthesis. Catalyzes the first committed step in the biosynthesis of AMP from IMP. The chain is Adenylosuccinate synthetase 1 from Trypanosoma cruzi (strain CL Brener).